The chain runs to 138 residues: 1,4-dihydroxy-2-naphthoyl-CoA hydrolase (138 aa).

Asp-16 is an active-site residue.

It belongs to the 4-hydroxybenzoyl-CoA thioesterase family. DHNA-CoA hydrolase subfamily.

The enzyme catalyses 1,4-dihydroxy-2-naphthoyl-CoA + H2O = 1,4-dihydroxy-2-naphthoate + CoA + H(+). The protein operates within cofactor biosynthesis; phylloquinone biosynthesis. It participates in quinol/quinone metabolism; 1,4-dihydroxy-2-naphthoate biosynthesis; 1,4-dihydroxy-2-naphthoate from chorismate: step 7/7. Functionally, catalyzes the specific hydrolysis of 1,4-dihydroxy-2-naphthoyl-CoA (DHNA-CoA) to 1,4-dihydroxy-2-naphthoate (DHNA), a reaction involved in phylloquinone (vitamin K1) biosynthesis. Is not active on benzoyl-CoA, phenylacetyl-CoA and aliphatic acyl-CoA thioesters. The protein is 1,4-dihydroxy-2-naphthoyl-CoA hydrolase of Synechocystis sp. (strain ATCC 27184 / PCC 6803 / Kazusa).